Reading from the N-terminus, the 184-residue chain is ATP synthase subunit b, chloroplastic (184 aa).

Residues 31–53 (LINLAVVIGVLVYFGKGVLTTIL) form a helical membrane-spanning segment.

Belongs to the ATPase B chain family. F-type ATPases have 2 components, F(1) - the catalytic core - and F(0) - the membrane proton channel. F(1) has five subunits: alpha(3), beta(3), gamma(1), delta(1), epsilon(1). F(0) has four main subunits: a(1), b(1), b'(1) and c(10-14). The alpha and beta chains form an alternating ring which encloses part of the gamma chain. F(1) is attached to F(0) by a central stalk formed by the gamma and epsilon chains, while a peripheral stalk is formed by the delta, b and b' chains.

It is found in the plastid. It localises to the chloroplast thylakoid membrane. In terms of biological role, f(1)F(0) ATP synthase produces ATP from ADP in the presence of a proton or sodium gradient. F-type ATPases consist of two structural domains, F(1) containing the extramembraneous catalytic core and F(0) containing the membrane proton channel, linked together by a central stalk and a peripheral stalk. During catalysis, ATP synthesis in the catalytic domain of F(1) is coupled via a rotary mechanism of the central stalk subunits to proton translocation. Component of the F(0) channel, it forms part of the peripheral stalk, linking F(1) to F(0). The protein is ATP synthase subunit b, chloroplastic of Staurastrum punctulatum (Green alga).